Reading from the N-terminus, the 530-residue chain is MPEKLAMSMVDIKDAGSELRDLESGALDTKSSAADVYYEGVELHRTNEFIDNKPSFFNRIAAALNAETKGIEPVTEDEKNDDSILNAATIWFSANMVIVAYSVGALGPLVFGLNFGQSVLVIIFFNILGLIPVALFSLFGVELGLRQMILSRYLAGNITARFFSLVNVIACVGWCVLNISVSAQLLNMVNEGSGHNCPIWAGCLIIAGGTVLVTFFGYSVVHAYEKWSWVPNFAAFLVIIAQLSRSGKFKGGEWVGGATTAGGVLSFGSSVFGSAAGWATYAADYTVYMPKTTSKYKIFFSVVAGLAFPLFFTMILGAACGMAALNDPTWKSYYDKNAMGGVIYAILVPNSLNGFGQFCCVLLALSTVANNVPGMYTVALSAQALWAPLAKIPRVVWTMAGNAATLGISIPATYYFDGFMENFMDSIGYYLAIYIAIACSEHFIYRRSFSAYNIDDWDNWEHLPIGIAGTAALIAGAFGVALGMCQTYWVGEISRLIGEYGGDIGFELGGSWAFIIYNIVRPLELKYFGR.

Thr-46 bears the Phosphothreonine mark. The next 12 helical transmembrane spans lie at 96–116, 119–139, 162–182, 197–217, 220–240, 263–283, 298–318, 345–365, 372–392, 396–416, 418–438, and 463–483; these read MVIV…LNFG, VLVI…FSLF, FFSL…ISVS, CPIW…TFFG, VVHA…LVII, GVLS…TYAA, IFFS…ILGA, AILV…LLAL, VPGM…LAKI, VWTM…TYYF, GFME…IAIA, and LPIG…VALG.

It belongs to the purine-cytosine permease (2.A.39) family.

It is found in the membrane. Probable purine-cytosine permease. The sequence is that of Purine-cytosine permease FCY22 (FCY22) from Saccharomyces cerevisiae (strain ATCC 204508 / S288c) (Baker's yeast).